A 186-amino-acid polypeptide reads, in one-letter code: uncharacterized protein (186 aa).

An N-terminal signal peptide occupies residues 1–21 (MKFFLGSALFLILTFINLVRA). Residues 22 to 142 (EFEFITPAED…AFSVNPIDKK (121 aa)) lie on the Extracellular side of the membrane. N-linked (GlcNAc...) asparagine glycosylation is found at N62, N75, N93, and N104. The chain crosses the membrane as a helical span at residues 143–163 (LAIGLSVGLSCCILIVLFLHF). Residues 164–186 (ATRRERRILKNEKELEMSSYRKH) are Cytoplasmic-facing.

Its subcellular location is the membrane. This is an uncharacterized protein from Schizosaccharomyces pombe (strain 972 / ATCC 24843) (Fission yeast).